The primary structure comprises 339 residues: Silicatein (339 aa).

A signal peptide spans 1–18; the sequence is MAIVYGAILFQIILIACA. Positions 19–122 are excised as a propeptide; it reads EFPPEWHAWK…REYQAPATVS (104 aa). Leucine 123 carries the post-translational modification N,N-dimethylleucine; alternate. Leucine 123 carries the N-methylleucine; alternate modification. Residue serine 188 is modified to Phosphoserine. Tyrosine 219 carries the phosphotyrosine modification. Residues histidine 286 and asparagine 306 contribute to the active site. Serine 335 bears the Phosphoserine mark.

Belongs to the peptidase C1 family. As to quaternary structure, homodimer. Homodimerization occurs as a result of non-covalent interactions and not through disulfide linkages between the two monomers.

Polymerizes silica around the axial filament during spicule formation. The chain is Silicatein from Petrosia ficiformis (Common Mediterranean sponge).